Consider the following 851-residue polypeptide: Protein FAM13B (851 aa).

The region spanning 23-212 (IPLDELQQGG…GLLENYYEFF (190 aa)) is the Rho-GAP domain. Residues 556 to 565 (IKDAKHKNSD) are compositionally biased toward basic and acidic residues. The segment at 556-611 (IKDAKHKNSDGEFAPQTRPRSNTLPKSFGSSLDHEDGESEGEPRVIQKEKTPSKEA) is disordered. Over residues 573–585 (RPRSNTLPKSFGS) the composition is skewed to polar residues. Basic and acidic residues predominate over residues 596-611 (GEPRVIQKEKTPSKEA).

It belongs to the FAM13 family.

The protein is Protein FAM13B (Fam13b) of Mus musculus (Mouse).